The following is a 367-amino-acid chain: Terpene cyclase verU1 (367 aa).

Residues 8–28 (IRCSLLLLGLVGIYTVWISSF) traverse the membrane as a helical segment. Asparagine 50 is a glycosylation site (N-linked (GlcNAc...) asparagine). The next 8 membrane-spanning stretches (helical) occupy residues 57–77 (FTGIDTLDKALGIFVVFYWPV), 85–105 (LSLIAFPAAVGVGEMWILFAL), 120–140 (MAMFGMGLMLVGPGIFLPIYC), 169–189 (CLLGGYYILVILLALPSPAVV), 197–217 (IIALLQGWPLLVSAMLWLTHL), 239–259 (ISAMACATISHLVPLLISLLA), 292–312 (FQWDYGLGSLALLLWAVGLHI), and 327–347 (LIPEALFLSVMMSPCGAAALY). Asparagine 352 carries an N-linked (GlcNAc...) asparagine glycan.

It belongs to the membrane-bound ascI terpene cyclase family.

It localises to the membrane. The protein operates within secondary metabolite biosynthesis; terpenoid biosynthesis. It participates in mycotoxin biosynthesis. Functionally, terpene cyclase; part of the gene cluster that mediates the biosynthesis of the neurotoxin verrucosidin, a methylated alpha-pyrone polyketide that inhibits oxidative phosphorylation in mitochondria and thereby causes neurological diseases. The carbon backbone of verrucosidin is synthesized by the HR-PKS verA, and further modified by the other verrucodidin cluster enzymes. This Penicillium polonicum protein is Terpene cyclase verU1.